We begin with the raw amino-acid sequence, 300 residues long: Cation-efflux pump FieF (300 aa).

Residues 24 to 44 traverse the membrane as a helical segment; sequence LLIKIFAWWYTGSVSILAALV. 2 residues coordinate Zn(2+): Asp-45 and Asp-49. The next 2 helical transmembrane spans lie at 82–102 and 114–134; these read AALAQSMFISGSALFLFLTGI and AGVGVVVTLIALFSTLALVTF. Zn(2+) is bound by residues His-153 and Asp-157. The next 2 helical transmembrane spans lie at 156-176 and 178-198; these read SDVMMNGAILVALGLSWYGWH and ADALFALGIGIYILYSALRMG.

This sequence belongs to the cation diffusion facilitator (CDF) transporter (TC 2.A.4) family. FieF subfamily. As to quaternary structure, homodimer.

It localises to the cell inner membrane. The enzyme catalyses Zn(2+)(in) + H(+)(out) = Zn(2+)(out) + H(+)(in). It catalyses the reaction Cd(2+)(in) + H(+)(out) = Cd(2+)(out) + H(+)(in). The catalysed reaction is Fe(2+)(in) + H(+)(out) = Fe(2+)(out) + H(+)(in). Functionally, divalent metal cation transporter which exports Zn(2+), Cd(2+) and possibly Fe(2+). May be involved in zinc and iron detoxification by efflux. This Klebsiella pneumoniae (strain 342) protein is Cation-efflux pump FieF.